The sequence spans 122 residues: Antitoxin protein TsiV3 (122 aa).

Positions 1-24 (MNNLLSAYVTMLLILLSISGGAIA) are cleaved as a signal peptide. Disulfide bonds link C28-C41 and C82-C100.

As to quaternary structure, homodimer; dimerization is critical for inhibitory activity. Forms a heterotetramer with VgrG3 composed of one TsiV3 homodimer and two VgrG3 molecules.

Its function is as follows. Immunity protein that plays a role in preventing early activation of toxin VgrG3. This chain is Antitoxin protein TsiV3, found in Vibrio cholerae serotype O1 (strain ATCC 39315 / El Tor Inaba N16961).